The sequence spans 142 residues: Transcriptional regulator MraZ (142 aa).

2 SpoVT-AbrB domains span residues 5–51 (ASAL…PRPE) and 77–120 (AMDV…DSQT).

This sequence belongs to the MraZ family. Forms oligomers.

It localises to the cytoplasm. It is found in the nucleoid. This is Transcriptional regulator MraZ from Burkholderia ambifaria (strain MC40-6).